The chain runs to 434 residues: Histidinol dehydrogenase (434 aa).

Substrate is bound by residues serine 242, glutamine 264, and histidine 267. Residues glutamine 264 and histidine 267 each coordinate Zn(2+). Active-site proton acceptor residues include glutamate 332 and histidine 333. Positions 333, 366, 420, and 425 each coordinate substrate. Aspartate 366 contacts Zn(2+). Histidine 425 contacts Zn(2+).

It belongs to the histidinol dehydrogenase family. Zn(2+) serves as cofactor.

It catalyses the reaction L-histidinol + 2 NAD(+) + H2O = L-histidine + 2 NADH + 3 H(+). The protein operates within amino-acid biosynthesis; L-histidine biosynthesis; L-histidine from 5-phospho-alpha-D-ribose 1-diphosphate: step 9/9. Functionally, catalyzes the sequential NAD-dependent oxidations of L-histidinol to L-histidinaldehyde and then to L-histidine. This chain is Histidinol dehydrogenase, found in Oleidesulfovibrio alaskensis (strain ATCC BAA-1058 / DSM 17464 / G20) (Desulfovibrio alaskensis).